A 207-amino-acid chain; its full sequence is DNA-directed RNA polymerase subunit alpha (207 aa).

The protein belongs to the RNA polymerase alpha chain family. In plastids the minimal PEP RNA polymerase catalytic core is composed of four subunits: alpha, beta, beta', and beta''. When a (nuclear-encoded) sigma factor is associated with the core the holoenzyme is formed, which can initiate transcription.

The protein localises to the plastid. The protein resides in the chloroplast. It carries out the reaction RNA(n) + a ribonucleoside 5'-triphosphate = RNA(n+1) + diphosphate. Its function is as follows. DNA-dependent RNA polymerase catalyzes the transcription of DNA into RNA using the four ribonucleoside triphosphates as substrates. In Euglena anabaena (Euglenaria anabaena), this protein is DNA-directed RNA polymerase subunit alpha (rpoA).